We begin with the raw amino-acid sequence, 615 residues long: Zinc finger protein 653 (615 aa).

4 disordered regions span residues 1 to 48 (MAER…ARRR), 95 to 117 (RSGRHGKPWEQVPKKPKRKKRRR), 176 to 236 (PLSD…SSGL), and 401 to 432 (EEKEEPVAPELATTVPESAEPEAEADGEELDG). The Nuclear localization signal motif lies at 107–118 (PKKPKRKKRRRR). Residues 108–117 (KKPKRKKRRR) show a composition bias toward basic residues. Residues 193-205 (AGSSDSSSSGSAS) are compositionally biased toward low complexity. Polar residues predominate over residues 226–236 (TPTSPVGSSGL). Over residues 419–432 (AEPEAEADGEELDG) the composition is skewed to acidic residues. Positions 445 to 451 (EPEKRRR) match the Nuclear localization signal motif. 5 C2H2-type zinc fingers span residues 467-492 (FHCPYEGCSQVYVALSSFQNHVNLVH), 498-522 (KVCPHPGCGKKFYLSNHLRRHMIIH), 528-550 (FTCETCGKSFKRKNHLEVHRRTH), 556-578 (LQCEICGYQCRQRASLNWHMKKH), and 586-609 (FTCDRCGKRFEKLDSVKFHTLKSH).

Belongs to the krueppel C2H2-type zinc-finger protein family. Interacts with NR5A1. In terms of tissue distribution, highly expressed in testis, cerebellum, temporal lobe, hippocampus and the adrenal gland. Moderately expressed in spleen, uterus, thymus, pancreas, kidney, stomach and rectum.

The protein resides in the nucleus. Transcriptional repressor. May repress NR5A1, PPARG, NR1H3, NR4A2, ESR1 and NR3C1 transcriptional activity. This Homo sapiens (Human) protein is Zinc finger protein 653 (ZNF653).